A 255-amino-acid polypeptide reads, in one-letter code: Pimeloyl-[acyl-carrier protein] methyl ester esterase (255 aa).

Substrate contacts are provided by residues W18, S78–L79, and F139–D143. Residue S78 is the Nucleophile of the active site. Catalysis depends on residues D203 and H233. H233 contributes to the substrate binding site.

Belongs to the AB hydrolase superfamily. Carboxylesterase BioH family. As to quaternary structure, monomer.

The protein localises to the cytoplasm. The catalysed reaction is 6-carboxyhexanoyl-[ACP] methyl ester + H2O = 6-carboxyhexanoyl-[ACP] + methanol + H(+). It participates in cofactor biosynthesis; biotin biosynthesis. Functionally, the physiological role of BioH is to remove the methyl group introduced by BioC when the pimeloyl moiety is complete. It allows to synthesize pimeloyl-ACP via the fatty acid synthetic pathway through the hydrolysis of the ester bonds of pimeloyl-ACP esters. This is Pimeloyl-[acyl-carrier protein] methyl ester esterase from Xylella fastidiosa (strain M12).